Reading from the N-terminus, the 318-residue chain is NADH-ubiquinone oxidoreductase chain 1 (318 aa).

8 helical membrane passes run 2 to 22 (PMIN…FLML), 76 to 96 (ALAL…IPLI), 100 to 120 (LGLL…LWSG), 146 to 166 (LALI…SALI), 171 to 191 (HSWL…STLA), 222 to 242 (LFFM…TMIF), 253 to 273 (ELYT…FLWI), and 294 to 314 (LPLT…TSGI).

Belongs to the complex I subunit 1 family. As to quaternary structure, core subunit of respiratory chain NADH dehydrogenase (Complex I) which is composed of 45 different subunits.

The protein localises to the mitochondrion inner membrane. It carries out the reaction a ubiquinone + NADH + 5 H(+)(in) = a ubiquinol + NAD(+) + 4 H(+)(out). Its function is as follows. Core subunit of the mitochondrial membrane respiratory chain NADH dehydrogenase (Complex I) which catalyzes electron transfer from NADH through the respiratory chain, using ubiquinone as an electron acceptor. Essential for the catalytic activity and assembly of complex I. This is NADH-ubiquinone oxidoreductase chain 1 (MT-ND1) from Pongo abelii (Sumatran orangutan).